The following is a 558-amino-acid chain: uncharacterized protein (558 aa).

The span at 338–354 (STSTSTSTSTSSSNDLN) shows a compositional bias: low complexity. The disordered stretch occupies residues 338-380 (STSTSTSTSTSSSNDLNLDSDSDDSDSDDSDSDSDSDSDSEID). Positions 355-380 (LDSDSDDSDSDDSDSDSDSDSDSEID) are enriched in acidic residues.

It localises to the plastid. This is an uncharacterized protein from Euglena longa (Euglenophycean alga).